The sequence spans 444 residues: MLDNFIVNQATKEFSVSEISNKIKELLENNFGYIKIKGEISGFKIASSGHAYFNLKENTAILACTCWRPTLAKIKFPLKDGMEVVISGKLSSYAGNSRYQLAVDNLQPAGLGTMLQILNERKTRLEKEGLFNKRRIPIPFLPTRIGVITSITGAVIKDIIHRIRERFPTHIIIWPVSVQGENSGNEIAAAIEGFNKLEEANKPSVIIVARGGGSIEDLWSFNDEILVRAAYNSKIPIISAVGHEVDYTLIDLAADKRAPTPTAAAEFAVPVRSILNNTLQSYEKVLLNNTKQLINYHEQNIANYDKIHRYLTNYINHRQQLLDETGFNLLDVLPCFIELQETKLKFCSKERINPAKIINYKTLELTHQTAYLSKSANNTLKNFEYKLELNSTLLASLDYHNVLKRGFAIVKGAMGNFLSSKITAADEKIFNIKFSDGEIKVVRN.

It belongs to the XseA family. As to quaternary structure, heterooligomer composed of large and small subunits.

The protein resides in the cytoplasm. It catalyses the reaction Exonucleolytic cleavage in either 5'- to 3'- or 3'- to 5'-direction to yield nucleoside 5'-phosphates.. Its function is as follows. Bidirectionally degrades single-stranded DNA into large acid-insoluble oligonucleotides, which are then degraded further into small acid-soluble oligonucleotides. The sequence is that of Exodeoxyribonuclease 7 large subunit from Rickettsia canadensis (strain McKiel).